Reading from the N-terminus, the 68-residue chain is Inhibitor of trypsin and hageman factor (68 aa).

An N-acetylserine modification is found at S1. Cysteines 3 and 48 form a disulfide.

This sequence belongs to the protease inhibitor I13 (potato type I serine protease inhibitor) family.

In terms of biological role, specifically inhibits both trypsin and activated Hageman factor. The chain is Inhibitor of trypsin and hageman factor from Cucurbita maxima (Pumpkin).